Reading from the N-terminus, the 291-residue chain is Small ribosomal subunit protein uS2 (291 aa).

The disordered stretch occupies residues 235–291 (NLQEDEESGDSGVDPYQDREEEITDYSNYTPKDEASGDDEDEEDNSLVNDEDLYDDK). The segment covering 270 to 291 (SGDDEDEEDNSLVNDEDLYDDK) has biased composition (acidic residues).

The protein belongs to the universal ribosomal protein uS2 family.

This is Small ribosomal subunit protein uS2 from Treponema denticola (strain ATCC 35405 / DSM 14222 / CIP 103919 / JCM 8153 / KCTC 15104).